We begin with the raw amino-acid sequence, 144 residues long: Probable calcium-binding protein CML31 (144 aa).

EF-hand domains are found at residues 1 to 31 (MAEI…FSPQ), 32 to 67 (ITSE…NGGG), 72 to 107 (EEEV…LGEK), and 108 to 143 (HTME…NKES). Positions 45, 47, 49, 51, 56, 85, 87, 89, 91, 96, 121, 123, 125, and 132 each coordinate Ca(2+).

Functionally, potential calcium sensor. The polypeptide is Probable calcium-binding protein CML31 (CML31) (Arabidopsis thaliana (Mouse-ear cress)).